We begin with the raw amino-acid sequence, 141 residues long: Putative pre-16S rRNA nuclease (141 aa).

This sequence belongs to the YqgF nuclease family.

Its subcellular location is the cytoplasm. Functionally, could be a nuclease involved in processing of the 5'-end of pre-16S rRNA. In Sodalis glossinidius (strain morsitans), this protein is Putative pre-16S rRNA nuclease.